A 422-amino-acid polypeptide reads, in one-letter code: MDTPASLNDLQHTTLAIVLAGGRGTRLGPLTNKRVKPAVHFGGKYRIIDFALSNCLNSGIRRIAVVTQYKAHSLLRHVQRGWGFLRGEFNEFIDLWPAQQRVEGAHWYRGTADAVFQNLDIIRSIRPKYVVVLAGDHIYKMDYTRMVMDHVESKADCTVGCIEVPRMEAVAFGVMHVDEERRVTGFVEKPADPPAMPGHPDIALASMGIYVFNADYLYSLLEDNITSVATDHDFGKDIIPRVVTSGNAIAHPFSMSCVSSDPSVEPYWRDVGTIDAYWAANLDLASTIPSLDLYDRNWPIWTHQEQLPPAKFVRDLNGLQGTGTNMIVCGGCVISGSQISRSVLSSNVVVNSFCNIAEAVLLPQVSIGASCRLRKVVIDRGCHIPDGTVIGEDPVRDGERFYRTDSGVVLVTAEALKRQTAR.

Alpha-D-glucose 1-phosphate-binding positions include Tyr108, Gly173, 188 to 189 (EK), and Ser206.

Belongs to the bacterial/plant glucose-1-phosphate adenylyltransferase family. Homotetramer.

It catalyses the reaction alpha-D-glucose 1-phosphate + ATP + H(+) = ADP-alpha-D-glucose + diphosphate. Its pathway is glycan biosynthesis; glycogen biosynthesis. Its function is as follows. Involved in the biosynthesis of ADP-glucose, a building block required for the elongation reactions to produce glycogen. Catalyzes the reaction between ATP and alpha-D-glucose 1-phosphate (G1P) to produce pyrophosphate and ADP-Glc. The chain is Glucose-1-phosphate adenylyltransferase from Paraburkholderia phymatum (strain DSM 17167 / CIP 108236 / LMG 21445 / STM815) (Burkholderia phymatum).